A 510-amino-acid polypeptide reads, in one-letter code: Light-independent protochlorophyllide reductase subunit B (510 aa).

Residue Asp-36 participates in [4Fe-4S] cluster binding. The Proton donor role is filled by Asp-296. Substrate is bound at residue 431-432; it reads GM.

This sequence belongs to the ChlB/BchB/BchZ family. Protochlorophyllide reductase is composed of three subunits; ChlL, ChlN and ChlB. Forms a heterotetramer of two ChlB and two ChlN subunits. The cofactor is [4Fe-4S] cluster.

It carries out the reaction chlorophyllide a + oxidized 2[4Fe-4S]-[ferredoxin] + 2 ADP + 2 phosphate = protochlorophyllide a + reduced 2[4Fe-4S]-[ferredoxin] + 2 ATP + 2 H2O. It functions in the pathway porphyrin-containing compound metabolism; chlorophyll biosynthesis (light-independent). Component of the dark-operative protochlorophyllide reductase (DPOR) that uses Mg-ATP and reduced ferredoxin to reduce ring D of protochlorophyllide (Pchlide) to form chlorophyllide a (Chlide). This reaction is light-independent. The NB-protein (ChlN-ChlB) is the catalytic component of the complex. This Synechococcus sp. (strain JA-2-3B'a(2-13)) (Cyanobacteria bacterium Yellowstone B-Prime) protein is Light-independent protochlorophyllide reductase subunit B.